The sequence spans 383 residues: Lipoyl synthase, mitochondrial (383 aa).

A mitochondrion-targeting transit peptide spans Met1 to Leu19. Residues Asp69–Gly97 form a disordered region. Residues Cys116, Cys121, Cys127, Cys147, Cys151, Cys154, and Ser362 each coordinate [4Fe-4S] cluster. The Radical SAM core domain occupies Lys132–Leu351.

The protein belongs to the radical SAM superfamily. Lipoyl synthase family. [4Fe-4S] cluster is required as a cofactor.

The protein localises to the mitochondrion. It carries out the reaction [[Fe-S] cluster scaffold protein carrying a second [4Fe-4S](2+) cluster] + N(6)-octanoyl-L-lysyl-[protein] + 2 oxidized [2Fe-2S]-[ferredoxin] + 2 S-adenosyl-L-methionine + 4 H(+) = [[Fe-S] cluster scaffold protein] + N(6)-[(R)-dihydrolipoyl]-L-lysyl-[protein] + 4 Fe(3+) + 2 hydrogen sulfide + 2 5'-deoxyadenosine + 2 L-methionine + 2 reduced [2Fe-2S]-[ferredoxin]. The protein operates within protein modification; protein lipoylation via endogenous pathway; protein N(6)-(lipoyl)lysine from octanoyl-[acyl-carrier-protein]: step 2/2. Its function is as follows. Catalyzes the radical-mediated insertion of two sulfur atoms into the C-6 and C-8 positions of the octanoyl moiety bound to the lipoyl domains of lipoate-dependent enzymes, thereby converting the octanoylated domains into lipoylated derivatives. The polypeptide is Lipoyl synthase, mitochondrial (Phytophthora infestans (strain T30-4) (Potato late blight agent)).